A 137-amino-acid chain; its full sequence is BolA-like protein 1 (137 aa).

Serine 81 carries the post-translational modification Phosphoserine. The interval 114–137 (WRENSQLDTSPPCLGGNKKTLGTP) is disordered.

This sequence belongs to the BolA/IbaG family. In terms of assembly, interacts with GLRX5. As to expression, widely expressed.

It is found in the mitochondrion. Acts as a mitochondrial iron-sulfur (Fe-S) cluster assembly factor that facilitates (Fe-S) cluster insertion into a subset of mitochondrial proteins. Probably acts together with the monothiol glutaredoxin GLRX5. May protect cells against oxidative stress. The sequence is that of BolA-like protein 1 from Homo sapiens (Human).